A 59-amino-acid chain; its full sequence is Conotoxin mr5a (59 aa).

The first 22 residues, M1–A22, serve as a signal peptide directing secretion. Positions R23–D48 are excised as a propeptide.

Contains 2 disulfide bonds that can be either 'C1-C3, C2-C4' or 'C1-C4, C2-C3', since these disulfide connectivities have been observed for conotoxins with cysteine framework V (for examples, see AC P0DQQ7 and AC P81755). As to expression, expressed by the venom duct.

The protein localises to the secreted. This Conus marmoreus (Marble cone) protein is Conotoxin mr5a.